We begin with the raw amino-acid sequence, 760 residues long: 5-methyltetrahydropteroyltriglutamate--homocysteine methyltransferase (760 aa).

5-methyltetrahydropteroyltri-L-glutamate-binding positions include 17-20 (RELK) and K113. Residues 433–435 (IGS) and E486 each bind L-homocysteine. L-methionine is bound by residues 433–435 (IGS) and E486. 5-methyltetrahydropteroyltri-L-glutamate-binding positions include 517–518 (RC) and W563. D601 is a binding site for L-homocysteine. Position 601 (D601) interacts with L-methionine. Position 607 (E607) interacts with 5-methyltetrahydropteroyltri-L-glutamate. Zn(2+) contacts are provided by H643, C645, and E667. The Proton donor role is filled by H696. C728 is a binding site for Zn(2+).

The protein belongs to the vitamin-B12 independent methionine synthase family. Zn(2+) is required as a cofactor.

The catalysed reaction is 5-methyltetrahydropteroyltri-L-glutamate + L-homocysteine = tetrahydropteroyltri-L-glutamate + L-methionine. It participates in amino-acid biosynthesis; L-methionine biosynthesis via de novo pathway; L-methionine from L-homocysteine (MetE route): step 1/1. In terms of biological role, catalyzes the transfer of a methyl group from 5-methyltetrahydrofolate to homocysteine resulting in methionine formation. This Chromobacterium violaceum (strain ATCC 12472 / DSM 30191 / JCM 1249 / CCUG 213 / NBRC 12614 / NCIMB 9131 / NCTC 9757 / MK) protein is 5-methyltetrahydropteroyltriglutamate--homocysteine methyltransferase.